The sequence spans 582 residues: 2-succinyl-5-enolpyruvyl-6-hydroxy-3-cyclohexene-1-carboxylate synthase (582 aa).

It belongs to the TPP enzyme family. MenD subfamily. Homodimer. It depends on Mg(2+) as a cofactor. Mn(2+) is required as a cofactor. Thiamine diphosphate serves as cofactor.

It carries out the reaction isochorismate + 2-oxoglutarate + H(+) = 5-enolpyruvoyl-6-hydroxy-2-succinyl-cyclohex-3-ene-1-carboxylate + CO2. The protein operates within quinol/quinone metabolism; 1,4-dihydroxy-2-naphthoate biosynthesis; 1,4-dihydroxy-2-naphthoate from chorismate: step 2/7. Its pathway is cofactor biosynthesis; phylloquinone biosynthesis. Catalyzes the thiamine diphosphate-dependent decarboxylation of 2-oxoglutarate and the subsequent addition of the resulting succinic semialdehyde-thiamine pyrophosphate anion to isochorismate to yield 2-succinyl-5-enolpyruvyl-6-hydroxy-3-cyclohexene-1-carboxylate (SEPHCHC). This Synechococcus elongatus (strain ATCC 33912 / PCC 7942 / FACHB-805) (Anacystis nidulans R2) protein is 2-succinyl-5-enolpyruvyl-6-hydroxy-3-cyclohexene-1-carboxylate synthase.